Consider the following 116-residue polypeptide: NADH-ubiquinone oxidoreductase chain 3 (116 aa).

3 helical membrane-spanning segments follow: residues 3–23, 56–76, and 85–105; these read LITTIIAITITLSAVLATISF, FFLIAILFLLFDLEIALLLPL, and PALTLAWSAAVLALLTLGLIY.

This sequence belongs to the complex I subunit 3 family.

It is found in the mitochondrion membrane. The catalysed reaction is a ubiquinone + NADH + 5 H(+)(in) = a ubiquinol + NAD(+) + 4 H(+)(out). Its function is as follows. Core subunit of the mitochondrial membrane respiratory chain NADH dehydrogenase (Complex I) that is believed to belong to the minimal assembly required for catalysis. Complex I functions in the transfer of electrons from NADH to the respiratory chain. The immediate electron acceptor for the enzyme is believed to be ubiquinone. The sequence is that of NADH-ubiquinone oxidoreductase chain 3 (MT-ND3) from Salmo salar (Atlantic salmon).